The primary structure comprises 375 residues: DNA replication and repair protein RecF (375 aa).

30-37 provides a ligand contact to ATP; it reads GLNGQGKT.

The protein belongs to the RecF family.

The protein localises to the cytoplasm. In terms of biological role, the RecF protein is involved in DNA metabolism; it is required for DNA replication and normal SOS inducibility. RecF binds preferentially to single-stranded, linear DNA. It also seems to bind ATP. The polypeptide is DNA replication and repair protein RecF (Halothermothrix orenii (strain H 168 / OCM 544 / DSM 9562)).